The chain runs to 407 residues: Argininosuccinate synthase (407 aa).

ATP is bound by residues 10-18 (AYSGGLDTS) and Ala-37. L-citrulline contacts are provided by Tyr-88 and Ser-93. Gly-118 lines the ATP pocket. Positions 120, 124, and 125 each coordinate L-aspartate. Asn-124 serves as a coordination point for L-citrulline. Residues Arg-128, Ser-179, Ser-188, Glu-264, and Tyr-276 each coordinate L-citrulline.

It belongs to the argininosuccinate synthase family. Type 1 subfamily. Homotetramer.

It is found in the cytoplasm. It carries out the reaction L-citrulline + L-aspartate + ATP = 2-(N(omega)-L-arginino)succinate + AMP + diphosphate + H(+). It participates in amino-acid biosynthesis; L-arginine biosynthesis; L-arginine from L-ornithine and carbamoyl phosphate: step 2/3. This chain is Argininosuccinate synthase, found in Jannaschia sp. (strain CCS1).